A 169-amino-acid polypeptide reads, in one-letter code: Transcription antitermination protein NusB (169 aa).

It belongs to the NusB family.

In terms of biological role, involved in transcription antitermination. Required for transcription of ribosomal RNA (rRNA) genes. Binds specifically to the boxA antiterminator sequence of the ribosomal RNA (rrn) operons. The protein is Transcription antitermination protein NusB of Deinococcus geothermalis (strain DSM 11300 / CIP 105573 / AG-3a).